Reading from the N-terminus, the 1353-residue chain is Xanthine dehydrogenase (1353 aa).

The 2Fe-2S ferredoxin-type domain maps to 17-104 (STLIFFVNGK…GSAVTTVEGI (88 aa)). Residues Cys56, Cys61, Cys64, Cys86, Cys126, Cys129, Cys161, and Cys163 each coordinate [2Fe-2S] cluster. The region spanning 245 to 434 (YKGERATWYR…VGLYFPKTLE (190 aa)) is the FAD-binding PCMH-type domain. Residues 273–280 (LVVGNTEI), Phe353, 363–367 (SLGGN), Asp376, Leu424, and Lys442 each bind FAD. Residues Gln790 and Phe821 each coordinate Mo-molybdopterin. Substrate-binding residues include Glu825 and Arg903. Arg935 is a Mo-molybdopterin binding site. A substrate-binding site is contributed by Phe937. Position 1102 (Ala1102) interacts with Mo-molybdopterin. The active-site Proton acceptor is Glu1285.

Belongs to the xanthine dehydrogenase family. Homodimer. Requires FAD as cofactor. Mo-molybdopterin is required as a cofactor. The cofactor is [2Fe-2S] cluster.

The protein resides in the peroxisome. It catalyses the reaction xanthine + NAD(+) + H2O = urate + NADH + H(+). The enzyme catalyses hypoxanthine + NAD(+) + H2O = xanthine + NADH + H(+). In terms of biological role, key enzyme in purine degradation. Catalyzes the oxidation of hypoxanthine to xanthine. Catalyzes the oxidation of xanthine to uric acid. The protein is Xanthine dehydrogenase (XDH) of Calliphora vicina (Blue blowfly).